The following is a 145-amino-acid chain: Arginine repressor (145 aa).

The protein belongs to the ArgR family.

It localises to the cytoplasm. The protein operates within amino-acid biosynthesis; L-arginine biosynthesis [regulation]. In terms of biological role, regulates arginine biosynthesis genes. In Streptococcus pyogenes serotype M6 (strain ATCC BAA-946 / MGAS10394), this protein is Arginine repressor.